The sequence spans 356 residues: UDP-N-acetylglucosamine--N-acetylmuramyl-(pentapeptide) pyrophosphoryl-undecaprenol N-acetylglucosamine transferase (356 aa).

Arginine 166, serine 196, and glutamine 290 together coordinate UDP-N-acetyl-alpha-D-glucosamine.

This sequence belongs to the glycosyltransferase 28 family. MurG subfamily.

It is found in the cell membrane. The enzyme catalyses Mur2Ac(oyl-L-Ala-gamma-D-Glu-L-Lys-D-Ala-D-Ala)-di-trans,octa-cis-undecaprenyl diphosphate + UDP-N-acetyl-alpha-D-glucosamine = beta-D-GlcNAc-(1-&gt;4)-Mur2Ac(oyl-L-Ala-gamma-D-Glu-L-Lys-D-Ala-D-Ala)-di-trans,octa-cis-undecaprenyl diphosphate + UDP + H(+). It participates in cell wall biogenesis; peptidoglycan biosynthesis. In terms of biological role, cell wall formation. Catalyzes the transfer of a GlcNAc subunit on undecaprenyl-pyrophosphoryl-MurNAc-pentapeptide (lipid intermediate I) to form undecaprenyl-pyrophosphoryl-MurNAc-(pentapeptide)GlcNAc (lipid intermediate II). This chain is UDP-N-acetylglucosamine--N-acetylmuramyl-(pentapeptide) pyrophosphoryl-undecaprenol N-acetylglucosamine transferase, found in Staphylococcus aureus (strain USA300).